The sequence spans 959 residues: Isoleucine--tRNA ligase (959 aa).

Residues 66–76 (PYANGDLHIGH) carry the 'HIGH' region motif. Glu592 contributes to the L-isoleucyl-5'-AMP binding site. The 'KMSKS' region motif lies at 633 to 637 (KMSKS). ATP is bound at residue Lys636. Zn(2+)-binding residues include Cys922, Cys925, Cys942, and Cys945.

Belongs to the class-I aminoacyl-tRNA synthetase family. IleS type 1 subfamily. As to quaternary structure, monomer. Zn(2+) serves as cofactor.

It is found in the cytoplasm. It catalyses the reaction tRNA(Ile) + L-isoleucine + ATP = L-isoleucyl-tRNA(Ile) + AMP + diphosphate. Catalyzes the attachment of isoleucine to tRNA(Ile). As IleRS can inadvertently accommodate and process structurally similar amino acids such as valine, to avoid such errors it has two additional distinct tRNA(Ile)-dependent editing activities. One activity is designated as 'pretransfer' editing and involves the hydrolysis of activated Val-AMP. The other activity is designated 'posttransfer' editing and involves deacylation of mischarged Val-tRNA(Ile). This Ralstonia pickettii (strain 12J) protein is Isoleucine--tRNA ligase.